Reading from the N-terminus, the 164-residue chain is Translocator protein homolog (164 aa).

5 helical membrane passes run 16-34 (WSAS…NSYK), 52-72 (SAFG…SHLA), 89-106 (ILYI…PLFY), 112-132 (KLAL…AKTW), and 141-163 (KWLI…YCLL).

The protein belongs to the TspO/BZRP family.

The protein localises to the mitochondrion membrane. Functionally, may play a role in the transport of porphyrins and heme. In Schizosaccharomyces pombe (strain 972 / ATCC 24843) (Fission yeast), this protein is Translocator protein homolog.